The primary structure comprises 332 residues: Holliday junction branch migration complex subunit RuvB (332 aa).

The tract at residues 1-182 (MKLNKNSELK…FGLILKLNYY (182 aa)) is large ATPase domain (RuvB-L). ATP contacts are provided by residues Leu21, Arg22, Gly63, Lys66, Thr67, Thr68, 129–131 (EDY), Arg172, Tyr182, and Arg219. Thr67 is a binding site for Mg(2+). The interval 183-253 (SEDELELIIK…ISEIALEKLT (71 aa)) is small ATPAse domain (RuvB-S). Residues 256-332 (KNGLDDADYT…FKLFKNDKIK (77 aa)) form a head domain (RuvB-H) region. DNA is bound by residues Arg311 and Arg316.

Belongs to the RuvB family. As to quaternary structure, homohexamer. Forms an RuvA(8)-RuvB(12)-Holliday junction (HJ) complex. HJ DNA is sandwiched between 2 RuvA tetramers; dsDNA enters through RuvA and exits via RuvB. An RuvB hexamer assembles on each DNA strand where it exits the tetramer. Each RuvB hexamer is contacted by two RuvA subunits (via domain III) on 2 adjacent RuvB subunits; this complex drives branch migration. In the full resolvosome a probable DNA-RuvA(4)-RuvB(12)-RuvC(2) complex forms which resolves the HJ.

It localises to the cytoplasm. The catalysed reaction is ATP + H2O = ADP + phosphate + H(+). In terms of biological role, the RuvA-RuvB-RuvC complex processes Holliday junction (HJ) DNA during genetic recombination and DNA repair, while the RuvA-RuvB complex plays an important role in the rescue of blocked DNA replication forks via replication fork reversal (RFR). RuvA specifically binds to HJ cruciform DNA, conferring on it an open structure. The RuvB hexamer acts as an ATP-dependent pump, pulling dsDNA into and through the RuvAB complex. RuvB forms 2 homohexamers on either side of HJ DNA bound by 1 or 2 RuvA tetramers; 4 subunits per hexamer contact DNA at a time. Coordinated motions by a converter formed by DNA-disengaged RuvB subunits stimulates ATP hydrolysis and nucleotide exchange. Immobilization of the converter enables RuvB to convert the ATP-contained energy into a lever motion, pulling 2 nucleotides of DNA out of the RuvA tetramer per ATP hydrolyzed, thus driving DNA branch migration. The RuvB motors rotate together with the DNA substrate, which together with the progressing nucleotide cycle form the mechanistic basis for DNA recombination by continuous HJ branch migration. Branch migration allows RuvC to scan DNA until it finds its consensus sequence, where it cleaves and resolves cruciform DNA. The protein is Holliday junction branch migration complex subunit RuvB of Phytoplasma mali (strain AT).